We begin with the raw amino-acid sequence, 157 residues long: Eukaryotic translation initiation factor 5A-1 (157 aa).

Residue Lys-52 is modified to Hypusine. 2 positions are modified to phosphoserine: Ser-75 and Ser-77. Thr-78 is modified (phosphothreonine).

The protein belongs to the eIF-5A family. In terms of processing, lys-52 undergoes hypusination, a unique post-translational modification that consists in the addition of a butylamino group from spermidine to lysine side chain, leading to the formation of the unusual amino acid hypusine. eIF-5As are the only known proteins to undergo this modification, which is essential for their function.

It is found in the cytoplasm. Functionally, translation factor that promotes translation elongation and termination, particularly upon ribosome stalling at specific amino acid sequence contexts. Binds between the exit (E) and peptidyl (P) site of the ribosome and promotes rescue of stalled ribosome: specifically required for efficient translation of polyproline-containing peptides as well as other motifs that stall the ribosome. Acts as a ribosome quality control (RQC) cofactor by joining the RQC complex to facilitate peptidyl transfer during CAT tailing step. This chain is Eukaryotic translation initiation factor 5A-1 (tif51a), found in Schizosaccharomyces pombe (strain 972 / ATCC 24843) (Fission yeast).